Consider the following 100-residue polypeptide: Urease subunit gamma (100 aa).

It belongs to the urease gamma subunit family. As to quaternary structure, heterotrimer of UreA (gamma), UreB (beta) and UreC (alpha) subunits. Three heterotrimers associate to form the active enzyme.

It localises to the cytoplasm. It carries out the reaction urea + 2 H2O + H(+) = hydrogencarbonate + 2 NH4(+). Its pathway is nitrogen metabolism; urea degradation; CO(2) and NH(3) from urea (urease route): step 1/1. This chain is Urease subunit gamma, found in Prochlorococcus marinus subsp. pastoris (strain CCMP1986 / NIES-2087 / MED4).